Reading from the N-terminus, the 371-residue chain is Ecto-ADP-ribosyltransferase 3 (371 aa).

Residues 1–26 (MKMGHFEMVTTLLAAAVLMDIFQVKA) form the signal peptide. Cysteines 43 and 255 form a disulfide. In terms of domain architecture, TR mART core spans 64-250 (ALLRMVWDNA…LVLQSINSTC (187 aa)). NAD(+) contacts are provided by Tyr101 and Asn182. The segment at 306–346 (VLQTEENPLLPDEKPDRSRGKANNPTPGLVPGPKSHPSASS) is disordered. The GPI-anchor amidated serine moiety is linked to residue Ser345. A propeptide spans 346–371 (SGNTLLPSVMASTILLVASAVNFIEL) (removed in mature form).

The protein belongs to the Arg-specific ADP-ribosyltransferase family.

It is found in the cell membrane. The enzyme catalyses L-arginyl-[protein] + NAD(+) = N(omega)-(ADP-D-ribosyl)-L-arginyl-[protein] + nicotinamide + H(+). The polypeptide is Ecto-ADP-ribosyltransferase 3 (Art3) (Mus musculus (Mouse)).